We begin with the raw amino-acid sequence, 191 residues long: Molybdenum cofactor guanylyltransferase (191 aa).

GTP-binding positions include 11–13 (LCG), Lys23, Asp66, and Asp97. Asp97 contributes to the Mg(2+) binding site.

It belongs to the MobA family. In terms of assembly, monomer. Mg(2+) serves as cofactor.

Its subcellular location is the cytoplasm. It catalyses the reaction Mo-molybdopterin + GTP + H(+) = Mo-molybdopterin guanine dinucleotide + diphosphate. Transfers a GMP moiety from GTP to Mo-molybdopterin (Mo-MPT) cofactor (Moco or molybdenum cofactor) to form Mo-molybdopterin guanine dinucleotide (Mo-MGD) cofactor. The chain is Molybdenum cofactor guanylyltransferase from Campylobacter jejuni subsp. doylei (strain ATCC BAA-1458 / RM4099 / 269.97).